We begin with the raw amino-acid sequence, 419 residues long: Probable G-protein coupled receptor 63 (419 aa).

The Extracellular segment spans residues 1–81; the sequence is MVFSAVLTAF…AFKSLNLPLQ (81 aa). 3 N-linked (GlcNAc...) asparagine glycosylation sites follow: N16, N28, and N62. The chain crosses the membrane as a helical span at residues 82–104; that stretch reads ITLSAIMIFILFVSFLGNLVVCL. At 105–115 the chain is on the cytoplasmic side; it reads MVYQKAAMRSA. A helical transmembrane segment spans residues 116-138; the sequence is INILLASLAFADMLLAVLNMPFA. Residues 139–157 are Extracellular-facing; it reads LVTILTTRWIFGKFFCRVS. The helical transmembrane segment at 158–177 threads the bilayer; that stretch reads AMFFWLFVIEGVAILLIISI. Residues 178–196 lie on the Cytoplasmic side of the membrane; it reads DRFLIIVQRQDKLNPYRAK. Residues 197–216 traverse the membrane as a helical segment; the sequence is VLIAVSWATSFCVAFPLAVG. The Extracellular portion of the chain corresponds to 217-240; the sequence is NPDLQIPSRAPQCVFGYTTNPGYQ. The helical transmembrane segment at 241–263 threads the bilayer; that stretch reads AYVILISLISFFIPFLVILYSFM. Over 264 to 315 the chain is Cytoplasmic; the sequence is GILNTLRHNALRIHSYPEGICLSQASKLGLMSLQRPFQMSIDMGFKTRAFTT. The helical transmembrane segment at 316 to 338 threads the bilayer; the sequence is ILILFAVFIVCWAPFTTYSLVAT. Residues 339 to 352 lie on the Extracellular side of the membrane; it reads FSKHFYYQHNFFEI. The chain crosses the membrane as a helical span at residues 353–375; the sequence is STWLLWLCYLKSALNPLIYYWRI. Residues 376-419 are Cytoplasmic-facing; that stretch reads KKFHDACLDMMPKSFKFLPQLPGHTKRRIRPSAVYVCGEHRTVV.

The protein belongs to the G-protein coupled receptor 1 family. As to expression, expressed in brain; detected in the frontal cortex, with lower levels in the thalamus, caudate, hypothalamus and midbrain.

The protein localises to the cell membrane. In terms of biological role, orphan receptor. May play a role in brain function. The chain is Probable G-protein coupled receptor 63 (GPR63) from Homo sapiens (Human).